The primary structure comprises 228 residues: Latherin (228 aa).

The first 20 residues, 1 to 20, serve as a signal peptide directing secretion; it reads MLKVSCLFVLLCGLLVPSSA. C153 and C196 are oxidised to a cystine.

Belongs to the BPI/LBP/Plunc superfamily. Plunc family. Monomer. In terms of processing, no sign of N-X-[ST] acceptor site even though reported as N-glycosylated. As to expression, found in sweat (at protein level).

Its subcellular location is the secreted. In terms of biological role, major protein in sweat, has surfactant properties. Has a role in temperature regulation by having a capacity to make hydrophobic surfaces wettable and so can function in promoting spreading and evaporation of sweat. The polypeptide is Latherin (LATH) (Equus caballus (Horse)).